Here is a 324-residue protein sequence, read N- to C-terminus: MLEQGLLVTAGVAFLISVALSPLFIPFLRKLKFGQSIRDEGPKSHQKKSGTPTMGGIVIYVSMMVTSLIMAIKFNHLGAEVSLLLLVTFGYGLIGFLDDYIKVVKKRNLGLTSKQKLVGQLVIAIAFFLIGKGQAFHTYIMIPGTDVKFELGWAYFVLVLFMLIGGSNAVNLTDGLDGLLSGTAAIAFGAFSIIAVAQEQFGVAIFCMAVVGAVLGFLVFNANPAKVFMGDTGSLALGGAIAAVAILLKQELLLVIIGGVFVMETLSVIIQVISFKTTGKRVFKMSPLHHHYELCGWSEWRVVVTFWSVGFLLAVLGIYIGVWM.

10 helical membrane-spanning segments follow: residues 5–25 (GLLVTAGVAFLISVALSPLFI), 52–72 (PTMGGIVIYVSMMVTSLIMAI), 77–97 (LGAEVSLLLLVTFGYGLIGFL), 122–142 (VIAIAFFLIGKGQAFHTYIMI), 149–169 (FELGWAYFVLVLFMLIGGSNA), 176–196 (LDGLLSGTAAIAFGAFSIIAV), 201–221 (FGVAIFCMAVVGAVLGFLVFN), 227–247 (VFMGDTGSLALGGAIAAVAIL), 253–273 (LLVIIGGVFVMETLSVIIQVI), and 302–322 (VVVTFWSVGFLLAVLGIYIGV).

It belongs to the glycosyltransferase 4 family. MraY subfamily. Requires Mg(2+) as cofactor.

The protein resides in the cell membrane. The enzyme catalyses UDP-N-acetyl-alpha-D-muramoyl-L-alanyl-gamma-D-glutamyl-meso-2,6-diaminopimeloyl-D-alanyl-D-alanine + di-trans,octa-cis-undecaprenyl phosphate = di-trans,octa-cis-undecaprenyl diphospho-N-acetyl-alpha-D-muramoyl-L-alanyl-D-glutamyl-meso-2,6-diaminopimeloyl-D-alanyl-D-alanine + UMP. It functions in the pathway cell wall biogenesis; peptidoglycan biosynthesis. Its function is as follows. Catalyzes the initial step of the lipid cycle reactions in the biosynthesis of the cell wall peptidoglycan: transfers peptidoglycan precursor phospho-MurNAc-pentapeptide from UDP-MurNAc-pentapeptide onto the lipid carrier undecaprenyl phosphate, yielding undecaprenyl-pyrophosphoryl-MurNAc-pentapeptide, known as lipid I. The polypeptide is Phospho-N-acetylmuramoyl-pentapeptide-transferase (Bacillus cereus (strain AH820)).